The sequence spans 238 residues: Protein MIS12 homolog (238 aa).

Positions 117–149 (ELDAELDSLRDKLNVVGKRSVELDSELQALERS) form a coiled coil.

This sequence belongs to the mis12 family.

Its subcellular location is the chromosome. It is found in the centromere. It localises to the kinetochore. Functionally, constitutive component of kinetochores that is essential for proper cell division during mitotic cell cycle. May play a role in the modulation of centromere during meiosis. The protein is Protein MIS12 homolog of Arabidopsis thaliana (Mouse-ear cress).